The chain runs to 281 residues: Aliphatic sulfonates import ATP-binding protein SsuB (281 aa).

An ABC transporter domain is found at 40–263 (LDIRGLRKSF…QRGSAELAAL (224 aa)). 72 to 79 (GRSGCGKS) is a binding site for ATP.

This sequence belongs to the ABC transporter superfamily. Aliphatic sulfonates importer (TC 3.A.1.17.2) family. As to quaternary structure, the complex is composed of two ATP-binding proteins (SsuB), two transmembrane proteins (SsuC) and a solute-binding protein (SsuA).

The protein localises to the cell inner membrane. It carries out the reaction ATP + H2O + aliphatic sulfonate-[sulfonate-binding protein]Side 1 = ADP + phosphate + aliphatic sulfonateSide 2 + [sulfonate-binding protein]Side 1.. Functionally, part of the ABC transporter complex SsuABC involved in aliphatic sulfonates import. Responsible for energy coupling to the transport system. This is Aliphatic sulfonates import ATP-binding protein SsuB from Rhodopseudomonas palustris (strain ATCC BAA-98 / CGA009).